The primary structure comprises 279 residues: MIQTFNELGALREQIAQWKREGLRVALVPTMGNLHGGHHSLVTLARQYADKVVASIFVNPTQFGPNEDFSRYPRTPEADVAGLEQVGCDAVWLPSVEAMYPLGVDKTTQMHAPGVSEVLEGASRPGHFDGVCTVVARLFLQVQPDVAVFGRKDYQQLAVIRQMVAELSFPIQIVGADIVRDEDGLAKSSRNQYLSAEQRPVATTIHRTLLGMREGYVAGQARDRIEADATAALQAAGFQVDYAVLRTPELAEPTFDGGGRVALIAARLGSTRLIDNLEF.

Residue 31–38 (MGNLHGGH) coordinates ATP. His38 acts as the Proton donor in catalysis. Gln62 serves as a coordination point for (R)-pantoate. Gln62 serves as a coordination point for beta-alanine. Position 150–153 (150–153 (GRKD)) interacts with ATP. Gln156 lines the (R)-pantoate pocket. ATP contacts are provided by residues Val179 and 187–190 (KSSR).

It belongs to the pantothenate synthetase family. As to quaternary structure, homodimer.

The protein localises to the cytoplasm. It carries out the reaction (R)-pantoate + beta-alanine + ATP = (R)-pantothenate + AMP + diphosphate + H(+). The protein operates within cofactor biosynthesis; (R)-pantothenate biosynthesis; (R)-pantothenate from (R)-pantoate and beta-alanine: step 1/1. Catalyzes the condensation of pantoate with beta-alanine in an ATP-dependent reaction via a pantoyl-adenylate intermediate. In Stenotrophomonas maltophilia (strain K279a), this protein is Pantothenate synthetase.